Reading from the N-terminus, the 421-residue chain is 4-hydroxy-3-methylbut-2-en-1-yl diphosphate synthase (flavodoxin) (421 aa).

[4Fe-4S] cluster-binding residues include Cys-298, Cys-301, Cys-344, and Glu-351.

Belongs to the IspG family. It depends on [4Fe-4S] cluster as a cofactor.

The catalysed reaction is (2E)-4-hydroxy-3-methylbut-2-enyl diphosphate + oxidized [flavodoxin] + H2O + 2 H(+) = 2-C-methyl-D-erythritol 2,4-cyclic diphosphate + reduced [flavodoxin]. It functions in the pathway isoprenoid biosynthesis; isopentenyl diphosphate biosynthesis via DXP pathway; isopentenyl diphosphate from 1-deoxy-D-xylulose 5-phosphate: step 5/6. Its function is as follows. Converts 2C-methyl-D-erythritol 2,4-cyclodiphosphate (ME-2,4cPP) into 1-hydroxy-2-methyl-2-(E)-butenyl 4-diphosphate. The chain is 4-hydroxy-3-methylbut-2-en-1-yl diphosphate synthase (flavodoxin) from Neisseria meningitidis serogroup C / serotype 2a (strain ATCC 700532 / DSM 15464 / FAM18).